Consider the following 259-residue polypeptide: (3R)-3-hydroxyacyl-CoA dehydrogenase (259 aa).

NAD(+) contacts are provided by residues 13-21 (LVTGAGSGI) and 40-41 (DL). Residue serine 58 is modified to Phosphoserine. 72 to 74 (ADV) contributes to the NAD(+) binding site. Serine 154 is a substrate binding site. Lysine 158 is subject to N6-succinyllysine. Tyrosine 167 functions as the Proton acceptor in the catalytic mechanism. Residues 167–171 (YAASK) and 200–202 (ITT) each bind NAD(+). Position 171 is an N6-succinyllysine (lysine 171).

Belongs to the short-chain dehydrogenases/reductases (SDR) family. In terms of assembly, heterotetramer with CBR4; contains two molecules of HSD17B8 and CBR4.

The protein resides in the mitochondrion matrix. The enzyme catalyses a (3R)-3-hydroxyacyl-CoA + NAD(+) = a 3-oxoacyl-CoA + NADH + H(+). It catalyses the reaction 17beta-estradiol + NAD(+) = estrone + NADH + H(+). The catalysed reaction is testosterone + NAD(+) = androst-4-ene-3,17-dione + NADH + H(+). It carries out the reaction 17beta-hydroxy-5alpha-androstan-3-one + NAD(+) = 5alpha-androstan-3,17-dione + NADH + H(+). It functions in the pathway steroid biosynthesis; estrogen biosynthesis. The protein operates within lipid metabolism; fatty acid biosynthesis. It participates in lipid metabolism; mitochondrial fatty acid beta-oxidation. Functionally, required for the solubility and assembly of the heterotetramer 3-ketoacyl-[acyl carrier protein] (ACP) reductase functional complex (KAR or KAR1) that forms part of the mitochondrial fatty acid synthase (mtFAS). Alpha-subunit of the KAR complex that acts as scaffold protein required for the stability of carbonyl reductase type-4 (CBR4, beta-subunit of the KAR complex) and for its 3-ketoacyl-ACP reductase activity, thereby participating in mitochondrial fatty acid biosynthesis. Catalyzes the NAD-dependent conversion of (3R)-3-hydroxyacyl-CoA into 3-ketoacyl-CoA (3-oxoacyl-CoA) with no chain length preference; this enzymatic activity is not needed for the KAR function. Prefers (3R)-3-hydroxyacyl-CoA over (3S)-3-hydroxyacyl-CoA and displays enzymatic activity only in the presence of NAD(+). Cooperates with enoyl-CoA hydratase 1 in mitochondria, together they constitute an alternative route to the auxiliary enzyme pathways for the breakdown of Z-PUFA (cis polyunsaturated fatty acid) enoyl-esters. NAD-dependent 17-beta-hydroxysteroid dehydrogenase with highest activity towards estradiol (17beta-estradiol or E2). Has very low activity towards testosterone and dihydrotestosterone (17beta-hydroxy-5alpha-androstan-3-one). Primarily an oxidative enzyme, it can switch to a reductive mode determined in the appropriate physiologic milieu and catalyze the reduction of estrone (E1) to form biologically active 17beta-estradiol. The chain is (3R)-3-hydroxyacyl-CoA dehydrogenase (HSD17B8) from Canis lupus familiaris (Dog).